A 443-amino-acid chain; its full sequence is Chromosomal replication initiator protein DnaA (443 aa).

The interval 1–76 (MMDAWPRCLE…GNGEVALAVG (76 aa)) is domain I, interacts with DnaA modulators. The interval 76 to 105 (GSRPRAPEPAPAPVAATIAPQAAPIAPFAG) is domain II. Residues 106–323 (NLDSHYTFAN…GALNTLVARA (218 aa)) are domain III, AAA+ region. 4 residues coordinate ATP: Gly151, Gly153, Lys154, and Thr155. A domain IV, binds dsDNA region spans residues 324–443 (NFTGRSITVE…WEKLIRKLSE (120 aa)).

The protein belongs to the DnaA family. As to quaternary structure, oligomerizes as a right-handed, spiral filament on DNA at oriC.

The protein resides in the cytoplasm. Its function is as follows. Plays an essential role in the initiation and regulation of chromosomal replication. ATP-DnaA binds to the origin of replication (oriC) to initiate formation of the DNA replication initiation complex once per cell cycle. Binds the DnaA box (a 9 base pair repeat at the origin) and separates the double-stranded (ds)DNA. Forms a right-handed helical filament on oriC DNA; dsDNA binds to the exterior of the filament while single-stranded (ss)DNA is stabiized in the filament's interior. The ATP-DnaA-oriC complex binds and stabilizes one strand of the AT-rich DNA unwinding element (DUE), permitting loading of DNA polymerase. After initiation quickly degrades to an ADP-DnaA complex that is not apt for DNA replication. Binds acidic phospholipids. The sequence is that of Chromosomal replication initiator protein DnaA from Xanthomonas oryzae pv. oryzae (strain KACC10331 / KXO85).